A 379-amino-acid chain; its full sequence is UDP-N-acetylglucosamine--N-acetylmuramyl-(pentapeptide) pyrophosphoryl-undecaprenol N-acetylglucosamine transferase (379 aa).

Residues 19–21 (TGG), asparagine 133, arginine 174, serine 207, isoleucine 261, and glutamine 306 contribute to the UDP-N-acetyl-alpha-D-glucosamine site.

Belongs to the glycosyltransferase 28 family. MurG subfamily.

Its subcellular location is the cell inner membrane. It carries out the reaction di-trans,octa-cis-undecaprenyl diphospho-N-acetyl-alpha-D-muramoyl-L-alanyl-D-glutamyl-meso-2,6-diaminopimeloyl-D-alanyl-D-alanine + UDP-N-acetyl-alpha-D-glucosamine = di-trans,octa-cis-undecaprenyl diphospho-[N-acetyl-alpha-D-glucosaminyl-(1-&gt;4)]-N-acetyl-alpha-D-muramoyl-L-alanyl-D-glutamyl-meso-2,6-diaminopimeloyl-D-alanyl-D-alanine + UDP + H(+). The protein operates within cell wall biogenesis; peptidoglycan biosynthesis. Functionally, cell wall formation. Catalyzes the transfer of a GlcNAc subunit on undecaprenyl-pyrophosphoryl-MurNAc-pentapeptide (lipid intermediate I) to form undecaprenyl-pyrophosphoryl-MurNAc-(pentapeptide)GlcNAc (lipid intermediate II). This is UDP-N-acetylglucosamine--N-acetylmuramyl-(pentapeptide) pyrophosphoryl-undecaprenol N-acetylglucosamine transferase from Porphyromonas gingivalis (strain ATCC BAA-308 / W83).